An 81-amino-acid chain; its full sequence is Small ribosomal subunit protein bS20 (81 aa).

The segment covering 1-11 has biased composition (basic residues); it reads MPNIKSQKKRV. Residues 1–20 are disordered; it reads MPNIKSQKKRVLTNEKSRAS.

Belongs to the bacterial ribosomal protein bS20 family.

In terms of biological role, binds directly to 16S ribosomal RNA. In Mesoplasma florum (strain ATCC 33453 / NBRC 100688 / NCTC 11704 / L1) (Acholeplasma florum), this protein is Small ribosomal subunit protein bS20.